The primary structure comprises 163 residues: MTNYLYILALQIAEAESEGGLFDFNATLPLMAVQILLFMVILNAVFYNPVAKVLDEREEYIRKNLTQASDILAKAEAITKQYEKDLAQERREAQLIISVAQKEAQDIVALEIKQAQKDTELLVNEATSQLNSQKQKALSALEDQVNTLTEQIKSKLLSNQLIS.

Residues 26-46 (ATLPLMAVQILLFMVILNAVF) form a helical membrane-spanning segment.

Belongs to the ATPase B chain family. As to quaternary structure, F-type ATPases have 2 components, F(1) - the catalytic core - and F(0) - the membrane proton channel. F(1) has five subunits: alpha(3), beta(3), gamma(1), delta(1), epsilon(1). F(0) has four main subunits: a(1), b(1), b'(1) and c(10-14). The alpha and beta chains form an alternating ring which encloses part of the gamma chain. F(1) is attached to F(0) by a central stalk formed by the gamma and epsilon chains, while a peripheral stalk is formed by the delta, b and b' chains.

It localises to the plastid. The protein resides in the chloroplast thylakoid membrane. In terms of biological role, f(1)F(0) ATP synthase produces ATP from ADP in the presence of a proton or sodium gradient. F-type ATPases consist of two structural domains, F(1) containing the extramembraneous catalytic core and F(0) containing the membrane proton channel, linked together by a central stalk and a peripheral stalk. During catalysis, ATP synthesis in the catalytic domain of F(1) is coupled via a rotary mechanism of the central stalk subunits to proton translocation. Its function is as follows. Component of the F(0) channel, it forms part of the peripheral stalk, linking F(1) to F(0). The b'-subunit is a diverged and duplicated form of b found in plants and photosynthetic bacteria. This is ATP synthase subunit b', chloroplastic from Guillardia theta (Cryptophyte).